The chain runs to 157 residues: SsrA-binding protein (157 aa).

Belongs to the SmpB family.

It localises to the cytoplasm. Its function is as follows. Required for rescue of stalled ribosomes mediated by trans-translation. Binds to transfer-messenger RNA (tmRNA), required for stable association of tmRNA with ribosomes. tmRNA and SmpB together mimic tRNA shape, replacing the anticodon stem-loop with SmpB. tmRNA is encoded by the ssrA gene; the 2 termini fold to resemble tRNA(Ala) and it encodes a 'tag peptide', a short internal open reading frame. During trans-translation Ala-aminoacylated tmRNA acts like a tRNA, entering the A-site of stalled ribosomes, displacing the stalled mRNA. The ribosome then switches to translate the ORF on the tmRNA; the nascent peptide is terminated with the 'tag peptide' encoded by the tmRNA and targeted for degradation. The ribosome is freed to recommence translation, which seems to be the essential function of trans-translation. The sequence is that of SsrA-binding protein from Lacticaseibacillus paracasei (strain ATCC 334 / BCRC 17002 / CCUG 31169 / CIP 107868 / KCTC 3260 / NRRL B-441) (Lactobacillus paracasei).